A 312-amino-acid chain; its full sequence is Very-long-chain 3-oxoacyl-CoA reductase (312 aa).

Residues 4–24 form a helical membrane-spanning segment; it reads ALPAAGFLYWVGASTVAYLAL. Residue 50-79 coordinates NADP(+); that stretch reads GEWAVVTGGTDGIGKSYAEELAKRGMKIVL. 2 consecutive transmembrane segments (helical) span residues 182-202 and 271-291; these read GAIL…LTIY and GYPI…WLYF. Residue serine 189 participates in substrate binding. Tyrosine 202 serves as the catalytic Proton acceptor. The short motif at 308–312 is the Di-lysine motif element; that stretch reads KMKMN.

Belongs to the short-chain dehydrogenases/reductases (SDR) family. 17-beta-HSD 3 subfamily.

The protein localises to the endoplasmic reticulum membrane. The catalysed reaction is a very-long-chain (3R)-3-hydroxyacyl-CoA + NADP(+) = a very-long-chain 3-oxoacyl-CoA + NADPH + H(+). It carries out the reaction 17beta-estradiol + NAD(+) = estrone + NADH + H(+). It catalyses the reaction 17beta-estradiol + NADP(+) = estrone + NADPH + H(+). The enzyme catalyses 3-oxooctadecanoyl-CoA + NADPH + H(+) = (3R)-hydroxyoctadecanoyl-CoA + NADP(+). The catalysed reaction is (7Z,10Z,13Z,16Z)-3-oxodocosatetraenoyl-CoA + NADPH + H(+) = (3R)-hydroxy-(7Z,10Z,13Z,16Z)-docosatetraenoyl-CoA + NADP(+). It carries out the reaction 3-oxo-(7Z,10Z,13Z,16Z,19Z)-docosapentaenoyl-CoA + NADPH + H(+) = (3R)-hydroxy-(7Z,10Z,13Z,16Z,19Z)-docosapentaenoyl-CoA + NADP(+). It catalyses the reaction (8Z,11Z,14Z)-3-oxoeicosatrienoyl-CoA + NADPH + H(+) = (3R)-hydroxy-(8Z,11Z,14Z)-eicosatrienoyl-CoA + NADP(+). Its pathway is lipid metabolism; fatty acid biosynthesis. It participates in steroid biosynthesis; estrogen biosynthesis. Catalyzes the second of the four reactions of the long-chain fatty acids elongation cycle. This endoplasmic reticulum-bound enzymatic process, allows the addition of two carbons to the chain of long- and very long-chain fatty acids/VLCFAs per cycle. This enzyme has a 3-ketoacyl-CoA reductase activity, reducing 3-ketoacyl-CoA to 3-hydroxyacyl-CoA, within each cycle of fatty acid elongation. Thereby, it may participate in the production of VLCFAs of different chain lengths that are involved in multiple biological processes as precursors of membrane lipids and lipid mediators. May also catalyze the transformation of estrone (E1) into estradiol (E2) and play a role in estrogen formation. The chain is Very-long-chain 3-oxoacyl-CoA reductase (HSD17B12) from Bos taurus (Bovine).